Here is a 72-residue protein sequence, read N- to C-terminus: GDDVKSACCDTCLCTRSQPPTCRCVDVGERCHSACNHCVCNYSNPPQCQCFDTHKFCYKACHSSEKEEVIKN.

Cystine bridges form between cysteine 8/cysteine 61, cysteine 9/cysteine 24, cysteine 12/cysteine 57, cysteine 14/cysteine 22, cysteine 31/cysteine 38, cysteine 35/cysteine 50, and cysteine 40/cysteine 48.

This sequence belongs to the Bowman-Birk serine protease inhibitor family.

Functionally, this inhibitor has two domains, each with separate antiprotease activity. 1 mole of inhibitor inhibits either 1 mole of trypsin or 2 moles of chymotrypsin, stoichiometrically. This is Bowman-Birk type proteinase inhibitor from Vicia sativa subsp. nigra (Common vetch).